We begin with the raw amino-acid sequence, 157 residues long: Small ribosomal subunit protein uS7 (157 aa).

It belongs to the universal ribosomal protein uS7 family. In terms of assembly, part of the 30S ribosomal subunit. Contacts proteins S9 and S11.

Its function is as follows. One of the primary rRNA binding proteins, it binds directly to 16S rRNA where it nucleates assembly of the head domain of the 30S subunit. Is located at the subunit interface close to the decoding center, probably blocks exit of the E-site tRNA. The sequence is that of Small ribosomal subunit protein uS7 from Chlamydia muridarum (strain MoPn / Nigg).